The chain runs to 177 residues: Alkyl hydroperoxide reductase AhpD (177 aa).

Cysteine 131 functions as the Proton donor in the catalytic mechanism. Cysteine 131 and cysteine 134 are disulfide-bonded. Cysteine 134 serves as the catalytic Cysteine sulfenic acid (-SOH) intermediate.

Belongs to the AhpD family.

The enzyme catalyses N(6)-[(R)-dihydrolipoyl]-L-lysyl-[lipoyl-carrier protein] + a hydroperoxide = N(6)-[(R)-lipoyl]-L-lysyl-[lipoyl-carrier protein] + an alcohol + H2O. Antioxidant protein with alkyl hydroperoxidase activity. Required for the reduction of the AhpC active site cysteine residues and for the regeneration of the AhpC enzyme activity. This Solibacter usitatus (strain Ellin6076) protein is Alkyl hydroperoxide reductase AhpD.